The primary structure comprises 236 residues: 1-(5-phosphoribosyl)-5-[(5-phosphoribosylamino)methylideneamino] imidazole-4-carboxamide isomerase (236 aa).

The active-site Proton acceptor is the Asp-8. Asp-129 (proton donor) is an active-site residue.

This sequence belongs to the HisA/HisF family.

It localises to the cytoplasm. The enzyme catalyses 1-(5-phospho-beta-D-ribosyl)-5-[(5-phospho-beta-D-ribosylamino)methylideneamino]imidazole-4-carboxamide = 5-[(5-phospho-1-deoxy-D-ribulos-1-ylimino)methylamino]-1-(5-phospho-beta-D-ribosyl)imidazole-4-carboxamide. It participates in amino-acid biosynthesis; L-histidine biosynthesis; L-histidine from 5-phospho-alpha-D-ribose 1-diphosphate: step 4/9. In Ruminiclostridium cellulolyticum (strain ATCC 35319 / DSM 5812 / JCM 6584 / H10) (Clostridium cellulolyticum), this protein is 1-(5-phosphoribosyl)-5-[(5-phosphoribosylamino)methylideneamino] imidazole-4-carboxamide isomerase.